The chain runs to 140 residues: Methylglyoxal synthase (140 aa).

Residues 1-140 enclose the MGS-like domain; the sequence is MKIALIAHDR…HDQDSNPINL (140 aa). Residues histidine 8, lysine 12, 34–37, and 54–55 contribute to the substrate site; these read TGTT and SG. Aspartate 60 functions as the Proton donor/acceptor in the catalytic mechanism. Position 87 (histidine 87) interacts with substrate.

This sequence belongs to the methylglyoxal synthase family.

The catalysed reaction is dihydroxyacetone phosphate = methylglyoxal + phosphate. In terms of biological role, catalyzes the formation of methylglyoxal from dihydroxyacetone phosphate. This is Methylglyoxal synthase from Latilactobacillus sakei subsp. sakei (strain 23K) (Lactobacillus sakei subsp. sakei).